Reading from the N-terminus, the 269-residue chain is Histone deacetylase HDT1 (269 aa).

The disordered stretch occupies residues 97 to 269 (PFEEEEDDED…HSKAKHSAGK (173 aa)). Acidic residues-rich tracts occupy residues 98-115 (FEEE…DEDI) and 153-179 (KDDE…DSEE). Over residues 228-238 (PSKQASKTPKS) the composition is skewed to polar residues. The C2H2-type zinc finger occupies 242-265 (HHCKPCNRSFGSEGALDSHSKAKH).

This sequence belongs to the histone deacetylase HD2 family. Predominantly expressed in ovaries. Accumulates predominantly in the micropylar region of the ovule's integument.

The protein resides in the nucleus. The protein localises to the nucleolus. Functionally, mediates the deacetylation of lysine residues on the N-terminal part of the core histones (H2A, H2B, H3 and H4). Histone deacetylation gives a tag for epigenetic repression and plays an important role in transcriptional regulation, cell cycle progression and developmental events. This chain is Histone deacetylase HDT1 (HDT1), found in Solanum chacoense (Chaco potato).